The sequence spans 553 residues: Glycerol-3-phosphate dehydrogenase (553 aa).

An FAD-binding site is contributed by 13–41 (DLIVIGGGINGVGTARDGALRGLKTLLIE).

It belongs to the FAD-dependent glycerol-3-phosphate dehydrogenase family. Requires FAD as cofactor.

Its subcellular location is the cytoplasm. It carries out the reaction a quinone + sn-glycerol 3-phosphate = dihydroxyacetone phosphate + a quinol. The sequence is that of Glycerol-3-phosphate dehydrogenase (glpD) from Synechocystis sp. (strain ATCC 27184 / PCC 6803 / Kazusa).